The sequence spans 448 residues: Receptor homology region, transmembrane domain- and RING domain-containing protein 2 (448 aa).

Residues 1–20 (MNRALVLLLYVCTVSCLASS) form the signal peptide. The Lumenal portion of the chain corresponds to 21-163 (KVILMRNNIT…IPSFENSAWS (143 aa)). N-linked (GlcNAc...) asparagine glycans are attached at residues N28 and N74. The region spanning 60–144 (DACQNLMNKP…ETGEVLKEYA (85 aa)) is the PA domain. Cysteines 62 and 87 form a disulfide. Residues 164–184 (IMAVSFISLLAMSAVLATCFF) form a helical membrane-spanning segment. Topologically, residues 185–448 (VRRHRIRRRT…YASANSLPDC (264 aa)) are cytoplasmic. An RING-type; atypical zinc finger spans residues 232–274 (CAICLEDYTVGDKLRLLPCCHKFHAACVDSWLTSWRTFCPVCK). Over residues 344 to 378 (QSSSNRRSPPISVSRSSVDLRQQAASPSPSPSQRS) the composition is skewed to low complexity. Disordered stretches follow at residues 344-380 (QSSSNRRSPPISVSRSSVDLRQQAASPSPSPSQRSYI) and 402-424 (MSPYRPSPSNASPAMAGSSNYPL). The segment covering 408 to 423 (SPSNASPAMAGSSNYP) has biased composition (polar residues).

It localises to the protein storage vacuole membrane. The protein resides in the golgi apparatus membrane. In terms of biological role, involved in the trafficking of vacuolar proteins. May function as a sorting receptor for protein trafficking to the protein storage vacuole (PSV). The chain is Receptor homology region, transmembrane domain- and RING domain-containing protein 2 (RMR2) from Arabidopsis thaliana (Mouse-ear cress).